The chain runs to 205 residues: MDPAWRRRIHVSNPTTINVEPRPRRESLRRQLLSQLFFKKMSQLFKKKRQTRPSTVWYGRVAFPPSAWQGPARVSPYGYESDSENEEYTRISSATSSNVLTDSPTTTQDDPTGRCTDAYAESPAVLHLDDVTRNHRGAAALPSEVYLDGFCDQHKDPSGRMGPIKRRLYSKTFCRKFAAINIILLMLQILVLIGIVYRGFGKECM.

Residues 72-114 (ARVSPYGYESDSENEEYTRISSATSSNVLTDSPTTTQDDPTGR) form a disordered region. The span at 90 to 100 (RISSATSSNVL) shows a compositional bias: polar residues. Positions 101 to 110 (TDSPTTTQDD) are enriched in low complexity.

This is an uncharacterized protein from Equus caballus (Horse).